Reading from the N-terminus, the 209-residue chain is MSRNKQSASSGRWLKEHFDDKYVQEAQKRGYRSRAIFKIEEIQKKDKLLKPGMTVVDLGAAPGGWSQYAAEVVGDEGQVIACDILSMDSLPGVSFLQGDFREEAVLSALLERIQPDMVDVVLSDMAPNMSGNLASDQPRAMYLVELALEMCKQVLAPNGSFAVKVFQGEGFDQYLAEIRNMFKVVKIRKPDSSRDRSREVYIVATGYKL.

S-adenosyl-L-methionine-binding residues include G63, W65, D83, D99, and D124. K164 functions as the Proton acceptor in the catalytic mechanism.

The protein belongs to the class I-like SAM-binding methyltransferase superfamily. RNA methyltransferase RlmE family.

Its subcellular location is the cytoplasm. The catalysed reaction is uridine(2552) in 23S rRNA + S-adenosyl-L-methionine = 2'-O-methyluridine(2552) in 23S rRNA + S-adenosyl-L-homocysteine + H(+). Its function is as follows. Specifically methylates the uridine in position 2552 of 23S rRNA at the 2'-O position of the ribose in the fully assembled 50S ribosomal subunit. This is Ribosomal RNA large subunit methyltransferase E from Photobacterium profundum (strain SS9).